A 256-amino-acid polypeptide reads, in one-letter code: Sec-independent protein translocase protein TatC (256 aa).

6 helical membrane-spanning segments follow: residues 25–45, 77–97, 117–137, 158–178, 195–215, and 217–237; these read VICVVLVFVALVYFSNDIYHF, AIVAIFISVPYLLYQIWAFIA, ILFYCGVAFAYYIVFPLVFSF, FALALFLAFGVCFEVPIAIIL, PYIIVAAFFIGMLLTPPDVFS, and TLLAIPMCLLFELGLLVARFY.

It belongs to the TatC family. In terms of assembly, the Tat system comprises two distinct complexes: a TatABC complex, containing multiple copies of TatA, TatB and TatC subunits, and a separate TatA complex, containing only TatA subunits. Substrates initially bind to the TatABC complex, which probably triggers association of the separate TatA complex to form the active translocon.

The protein localises to the cell inner membrane. In terms of biological role, part of the twin-arginine translocation (Tat) system that transports large folded proteins containing a characteristic twin-arginine motif in their signal peptide across membranes. Together with TatB, TatC is part of a receptor directly interacting with Tat signal peptides. The polypeptide is Sec-independent protein translocase protein TatC (Haemophilus influenzae (strain ATCC 51907 / DSM 11121 / KW20 / Rd)).